Here is a 291-residue protein sequence, read N- to C-terminus: Nucleotide-binding protein LJ_0866 (291 aa).

13–20 (GMSGAGKT) is an ATP binding site. 63-66 (DLRV) serves as a coordination point for GTP.

This sequence belongs to the RapZ-like family.

Displays ATPase and GTPase activities. The sequence is that of Nucleotide-binding protein LJ_0866 from Lactobacillus johnsonii (strain CNCM I-12250 / La1 / NCC 533).